A 118-amino-acid polypeptide reads, in one-letter code: Large ribosomal subunit protein bL19 (118 aa).

Belongs to the bacterial ribosomal protein bL19 family.

Its function is as follows. This protein is located at the 30S-50S ribosomal subunit interface and may play a role in the structure and function of the aminoacyl-tRNA binding site. This is Large ribosomal subunit protein bL19 from Dictyoglomus thermophilum (strain ATCC 35947 / DSM 3960 / H-6-12).